Reading from the N-terminus, the 135-residue chain is T-cell receptor gamma chain V region 5/10-13 (135 aa).

A signal peptide spans 1–18; sequence MLLLRWPTFCCLWVFGLG. A v segment region spans residues 19–114; that stretch reads QLEQTELSVT…DEATYYCAVC (96 aa). The j segment stretch occupies residues 115-135; the sequence is RSGTSWVKIFAKGTKLVVIPP.

This is T-cell receptor gamma chain V region 5/10-13 (Tcrg-V1) from Mus musculus (Mouse).